Here is a 207-residue protein sequence, read N- to C-terminus: Large ribosomal subunit protein uL4 (207 aa).

The tract at residues 44 to 77 is disordered; that stretch reads LRQGTHKTKGRSEVRGGGRKPWRQKGTGRARQGS. Basic residues predominate over residues 60 to 71; the sequence is GGRKPWRQKGTG.

Belongs to the universal ribosomal protein uL4 family. Part of the 50S ribosomal subunit.

Its function is as follows. One of the primary rRNA binding proteins, this protein initially binds near the 5'-end of the 23S rRNA. It is important during the early stages of 50S assembly. It makes multiple contacts with different domains of the 23S rRNA in the assembled 50S subunit and ribosome. Functionally, forms part of the polypeptide exit tunnel. The chain is Large ribosomal subunit protein uL4 from Shouchella clausii (strain KSM-K16) (Alkalihalobacillus clausii).